The following is a 196-amino-acid chain: Ribosomal RNA large subunit methyltransferase E (196 aa).

S-adenosyl-L-methionine-binding residues include G52, W54, D72, D88, and D111. K151 (proton acceptor) is an active-site residue.

This sequence belongs to the class I-like SAM-binding methyltransferase superfamily. RNA methyltransferase RlmE family.

The protein localises to the cytoplasm. The enzyme catalyses uridine(2552) in 23S rRNA + S-adenosyl-L-methionine = 2'-O-methyluridine(2552) in 23S rRNA + S-adenosyl-L-homocysteine + H(+). Its function is as follows. Specifically methylates the uridine in position 2552 of 23S rRNA at the 2'-O position of the ribose in the fully assembled 50S ribosomal subunit. The polypeptide is Ribosomal RNA large subunit methyltransferase E (Cenarchaeum symbiosum (strain A)).